A 346-amino-acid polypeptide reads, in one-letter code: S-adenosylmethionine:tRNA ribosyltransferase-isomerase (346 aa).

The protein belongs to the QueA family. Monomer.

Its subcellular location is the cytoplasm. It carries out the reaction 7-aminomethyl-7-carbaguanosine(34) in tRNA + S-adenosyl-L-methionine = epoxyqueuosine(34) in tRNA + adenine + L-methionine + 2 H(+). It functions in the pathway tRNA modification; tRNA-queuosine biosynthesis. In terms of biological role, transfers and isomerizes the ribose moiety from AdoMet to the 7-aminomethyl group of 7-deazaguanine (preQ1-tRNA) to give epoxyqueuosine (oQ-tRNA). This chain is S-adenosylmethionine:tRNA ribosyltransferase-isomerase, found in Neisseria gonorrhoeae (strain ATCC 700825 / FA 1090).